Here is a 130-residue protein sequence, read N- to C-terminus: uncharacterized protein (130 aa).

The interval 1 to 100 (MSSNSDNTEC…AEPDAAKEEP (100 aa)) is disordered. 2 stretches are compositionally biased toward basic and acidic residues: residues 57 to 75 (YTTR…KMMD) and 91 to 100 (AEPDAAKEEP).

This is an uncharacterized protein from Equine herpesvirus 1 (strain Ab4p) (EHV-1).